The following is a 1825-amino-acid chain: Proteasome activator complex subunit 4B (1825 aa).

6 HEAT repeats span residues 458–502 (PEGP…LVDC), 981–1020 (NFCCRDITPRVLEFLEPTRTDVTQQQFKGALYCLLGNHCG), 1162–1200 (YPLPAPAVFFFVQSLNHDALVVRKMAIAAVAGILKQLKR), 1336–1374 (DAFLPVLKPHMERLANDSHESTQRCVAEIIAGLIRGSKH), 1618–1656 (PEQIPMVLAVLHEIAGSSSWHARYSVLTYLQTMVFYNLF), and 1662–1700 (EQCVQGVRALVIRLLEDEQLEVREMAATTLSGFLQCNFL). The segment at 1632-1720 (AGSSSWHARY…EALCKTRLPK (89 aa)) is bromodomain-like (BRDL).

It belongs to the BLM10 family. As to quaternary structure, homodimer. Interacts with the 20S and 26S proteasomes.

The protein localises to the cytoplasm. The protein resides in the cytosol. It localises to the nucleus. It is found in the nucleus speckle. In terms of biological role, associated component of the proteasome that specifically recognizes acetylated histones and promotes ATP- and ubiquitin-independent degradation of core histones during DNA damage response. Recognizes and binds acetylated histones via its bromodomain-like (BRDL) region and activates the proteasome by opening the gated channel for substrate entry. Binds to the core proteasome via its C-terminus, which occupies the same binding sites as the proteasomal ATPases, opening the closed structure of the proteasome via an active gating mechanism. involved in DNA damage response in somatic cells: binds to acetylated histones and promotes degradation of histones. The sequence is that of Proteasome activator complex subunit 4B (psme4b) from Danio rerio (Zebrafish).